A 452-amino-acid polypeptide reads, in one-letter code: Imaginal disk growth factor 6 (452 aa).

Residues 1-18 form the signal peptide; it reads MIIKALAIVSLCLASIQA. Residues 29 to 452 form the GH18 domain; sequence KHLVCYYDSA…LRAIKYRLTN (424 aa). Cys33 and Cys60 form a disulfide bridge. A glycan (N-linked (GlcNAc...) asparagine) is linked at Asn233. Cysteines 352 and 435 form a disulfide.

It belongs to the glycosyl hydrolase 18 family. IDGF subfamily. Post-translationally, glycosylated. In larvae, it is expressed in the fat body and by hemocytes.

The protein localises to the secreted. Its function is as follows. Probably required to stimulate the proliferation, polarization and motility of imaginal disk cells. May act by stabilizing the binding of insulin-like peptides to its receptor through a simultaneous interaction with both molecules to form a multiprotein signaling complex. This is Imaginal disk growth factor 6 from Drosophila melanogaster (Fruit fly).